Reading from the N-terminus, the 387-residue chain is Protein TsgA homolog (387 aa).

12 consecutive transmembrane segments (helical) span residues 11–31 (WISF…GMIM), 47–67 (NIFT…SWLI), 76–96 (LIFG…STSI), 101–121 (INIF…TFII), 134–154 (LLLT…ISAY), 160–180 (ILWY…FILT), 205–225 (IILL…FISW), 243–263 (VLVS…SFII), 271–291 (MFIF…YSKS), 299–319 (IISL…LASL), 331–351 (LILF…SPIV), and 358–378 (TTLI…CIIF).

The protein belongs to the major facilitator superfamily. TsgA family.

It localises to the cell membrane. The sequence is that of Protein TsgA homolog from Buchnera aphidicola subsp. Schizaphis graminum (strain Sg).